Consider the following 427-residue polypeptide: 12-alpha,13-alpha-dihydroxyfumitremorgin C prenyltransferase (427 aa).

Residue E94 participates in substrate binding. Dimethylallyl diphosphate is bound by residues R105, K192, Y194, Y268, Q353, Y355, Y419, and Y423.

The protein belongs to the tryptophan dimethylallyltransferase family.

It catalyses the reaction 12alpha,13alpha-dihydroxyfumitremorgin C + dimethylallyl diphosphate = fumitremorgin B + diphosphate. The protein operates within mycotoxin biosynthesis. In terms of biological role, 12-alpha,13-alpha-dihydroxyfumitremorgin C prenyltransferase; part of the gene cluster that mediates the biosynthesis of fumitremorgins, indole alkaloids that carry not only intriguing chemical structures, but also interesting biological and pharmacological activities. The biosynthesis of fumitremorgin-type alkaloids begins by condensation of the two amino acids L-tryptophan and L-proline to brevianamide F, catalyzed by the non-ribosomal peptide synthetase ftmA. Brevianamide F is then prenylated by the prenyltransferase ftmPT1/ftmB in the presence of dimethylallyl diphosphate, resulting in the formation of tryprostatin B. The three cytochrome P450 monooxygenases, ftmP450-1/ftmC, ftmP450-2/ftmE and ftmP450-3/FtmG, are responsible for the conversion of tryprostatin B to 6-hydroxytryprostatin B, tryprostatin A to fumitremorgin C and fumitremorgin C to 12,13-dihydroxyfumitremorgin C, respectively. The putative methyltransferase ftmMT/ftmD is expected for the conversion of 6-hydroxytryprostatin B to tryprostatin A. FtmPT2/FtmH catalyzes the prenylation of 12,13-dihydroxyfumitre-morgin C in the presence of dimethylallyl diphosphate, resulting in the formation of fumitremorgin B. Fumitremorgin B is further converted to verruculogen by ftmOx1/ftmF via the insertion of an endoperoxide bond between the two prenyl moieties. In some fungal species, verruculogen is further converted to fumitremorgin A, but the enzymes involved in this step have not been identified yet. This Aspergillus fumigatus (strain ATCC MYA-4609 / CBS 101355 / FGSC A1100 / Af293) (Neosartorya fumigata) protein is 12-alpha,13-alpha-dihydroxyfumitremorgin C prenyltransferase.